A 522-amino-acid polypeptide reads, in one-letter code: Peptide chain release factor 3 (522 aa).

Positions 9–276 constitute a tr-type G domain; it reads KKRRTFAIIS…SFVNLAPAPQ (268 aa). Residues 18 to 25, 86 to 90, and 140 to 143 each bind GTP; these read SHPDAGKT, DTPGH, and NKLD.

Belongs to the TRAFAC class translation factor GTPase superfamily. Classic translation factor GTPase family. PrfC subfamily.

The protein localises to the cytoplasm. Functionally, increases the formation of ribosomal termination complexes and stimulates activities of RF-1 and RF-2. It binds guanine nucleotides and has strong preference for UGA stop codons. It may interact directly with the ribosome. The stimulation of RF-1 and RF-2 is significantly reduced by GTP and GDP, but not by GMP. The chain is Peptide chain release factor 3 from Lactobacillus gasseri (strain ATCC 33323 / DSM 20243 / BCRC 14619 / CIP 102991 / JCM 1131 / KCTC 3163 / NCIMB 11718 / NCTC 13722 / AM63).